The sequence spans 208 residues: FMN-dependent NADH:quinone oxidoreductase (208 aa).

FMN contacts are provided by residues 17–19 (SNS), 99–102 (MWNL), and 143–146 (SRGG).

It belongs to the azoreductase type 1 family. As to quaternary structure, homodimer. It depends on FMN as a cofactor.

The enzyme catalyses 2 a quinone + NADH + H(+) = 2 a 1,4-benzosemiquinone + NAD(+). The catalysed reaction is N,N-dimethyl-1,4-phenylenediamine + anthranilate + 2 NAD(+) = 2-(4-dimethylaminophenyl)diazenylbenzoate + 2 NADH + 2 H(+). Functionally, quinone reductase that provides resistance to thiol-specific stress caused by electrophilic quinones. Its function is as follows. Also exhibits azoreductase activity. Catalyzes the reductive cleavage of the azo bond in aromatic azo compounds to the corresponding amines. The protein is FMN-dependent NADH:quinone oxidoreductase of Staphylococcus aureus (strain bovine RF122 / ET3-1).